A 206-amino-acid polypeptide reads, in one-letter code: LexA repressor (206 aa).

The H-T-H motif DNA-binding region spans 28-48 (RAEIATRLGFKSANAAEEHLK). Residues Ser-123 and Lys-160 each act as for autocatalytic cleavage activity in the active site.

The protein belongs to the peptidase S24 family. In terms of assembly, homodimer.

It catalyses the reaction Hydrolysis of Ala-|-Gly bond in repressor LexA.. Its function is as follows. Represses a number of genes involved in the response to DNA damage (SOS response), including recA and lexA. In the presence of single-stranded DNA, RecA interacts with LexA causing an autocatalytic cleavage which disrupts the DNA-binding part of LexA, leading to derepression of the SOS regulon and eventually DNA repair. This chain is LexA repressor, found in Shewanella putrefaciens (strain CN-32 / ATCC BAA-453).